We begin with the raw amino-acid sequence, 758 residues long: Vitamin K-dependent gamma-carboxylase (758 aa).

The disordered stretch occupies residues 1–34 (MAVSARPARAPRGSDKVKKDKAAQTSGPRQGSRM). Ala-2 carries the post-translational modification N-acetylalanine. Over 2–60 (AVSARPARAPRGSDKVKKDKAAQTSGPRQGSRMGKLLGFEWTDVSSWERLVTLLNRPTD) the chain is Cytoplasmic. The span at 12 to 22 (RGSDKVKKDKA) shows a compositional bias: basic and acidic residues. A helical transmembrane segment spans residues 61–81 (PAGLAVFRFLFGLMMVLDIPQ). At 82-113 (ERGLSSLDRRYLDGLEVCRFPLLDALQPLPLD) the chain is on the lumenal side. A disulfide bridge connects residues Cys-99 and Cys-450. Residues 114–134 (WMYLIYTIMFLGALGMMLGLC) traverse the membrane as a helical segment. Over 135–136 (YR) the chain is Cytoplasmic. Residues 137–157 (ISCVLFLLPYWYVFLLDKTSW) form a helical membrane-spanning segment. The Lumenal segment spans residues 158–292 (NNHSYLYGLL…VSYFHCMNSQ (135 aa)). Residues 293–313 (LFSIGMFPYVMLASSPLFCSP) traverse the membrane as a helical segment. Residues 314–363 (EWPRKLVAHCPKKLQELLPLRTAPQPSTSCMYKRSRARGSQKPGLRHKLS) lie on the Cytoplasmic side of the membrane. Residues 364-384 (TAFTLLYLLEQLFLPYSHFLT) form a helical membrane-spanning segment. Topologically, residues 385–758 (QGYNNWTNGL…PDSHPVHSEF (374 aa)) are lumenal. The segment at 727 to 758 (PFEPAGEPSPVNTDSSNPNPPEPDSHPVHSEF) is disordered. The segment covering 749–758 (PDSHPVHSEF) has biased composition (basic and acidic residues).

In terms of assembly, monomer. May interact with CALU. In terms of processing, the N-terminus is blocked.

The protein localises to the endoplasmic reticulum membrane. The catalysed reaction is 4-carboxy-L-glutamyl-[protein] + 2,3-epoxyphylloquinone + H2O + H(+) = phylloquinol + L-glutamyl-[protein] + CO2 + O2. Its function is as follows. Mediates the vitamin K-dependent carboxylation of glutamate residues to calcium-binding gamma-carboxyglutamate (Gla) residues with the concomitant conversion of the reduced hydroquinone form of vitamin K to vitamin K epoxide. Catalyzes gamma-carboxylation of various proteins, such as blood coagulation factors (F2, F7, F9 and F10), osteocalcin (BGLAP) or matrix Gla protein (MGP). The chain is Vitamin K-dependent gamma-carboxylase (GGCX) from Bos taurus (Bovine).